A 704-amino-acid polypeptide reads, in one-letter code: Elongation factor G (704 aa).

A tr-type G domain is found at 8-290 (EKYRNIGICA…GVVRYLPAPN (283 aa)). Residues 17–24 (AHVDAGKT), 88–92 (DTPGH), and 142–145 (NKMD) contribute to the GTP site.

The protein belongs to the TRAFAC class translation factor GTPase superfamily. Classic translation factor GTPase family. EF-G/EF-2 subfamily.

The protein localises to the cytoplasm. In terms of biological role, catalyzes the GTP-dependent ribosomal translocation step during translation elongation. During this step, the ribosome changes from the pre-translocational (PRE) to the post-translocational (POST) state as the newly formed A-site-bound peptidyl-tRNA and P-site-bound deacylated tRNA move to the P and E sites, respectively. Catalyzes the coordinated movement of the two tRNA molecules, the mRNA and conformational changes in the ribosome. In Francisella tularensis subsp. holarctica (strain FTNF002-00 / FTA), this protein is Elongation factor G.